The primary structure comprises 244 residues: tRNA uridine(34) hydroxylase (244 aa).

Positions 129-219 (QGRELVMLDT…GILKYFEETD (91 aa)) constitute a Rhodanese domain. Cysteine 183 (cysteine persulfide intermediate) is an active-site residue.

The protein belongs to the TrhO family.

It catalyses the reaction uridine(34) in tRNA + AH2 + O2 = 5-hydroxyuridine(34) in tRNA + A + H2O. In terms of biological role, catalyzes oxygen-dependent 5-hydroxyuridine (ho5U) modification at position 34 in tRNAs. This Bordetella bronchiseptica (strain ATCC BAA-588 / NCTC 13252 / RB50) (Alcaligenes bronchisepticus) protein is tRNA uridine(34) hydroxylase.